Reading from the N-terminus, the 284-residue chain is Acetylglutamate kinase (284 aa).

Residues 64–65 (GG), R86, and N181 contribute to the substrate site.

The protein belongs to the acetylglutamate kinase family. ArgB subfamily.

Its subcellular location is the cytoplasm. The enzyme catalyses N-acetyl-L-glutamate + ATP = N-acetyl-L-glutamyl 5-phosphate + ADP. The protein operates within amino-acid biosynthesis; L-arginine biosynthesis; N(2)-acetyl-L-ornithine from L-glutamate: step 2/4. Catalyzes the ATP-dependent phosphorylation of N-acetyl-L-glutamate. The sequence is that of Acetylglutamate kinase from Wolinella succinogenes (strain ATCC 29543 / DSM 1740 / CCUG 13145 / JCM 31913 / LMG 7466 / NCTC 11488 / FDC 602W) (Vibrio succinogenes).